The chain runs to 351 residues: N(4)-bis(aminopropyl)spermidine synthase (351 aa).

The protein belongs to the branched-chain polyamine synthase family.

It is found in the cytoplasm. The enzyme catalyses 2 S-adenosyl 3-(methylsulfanyl)propylamine + spermidine = N(4)-bis(aminopropyl)spermidine + 2 S-methyl-5'-thioadenosine + 2 H(+). It functions in the pathway amine and polyamine biosynthesis. Functionally, involved in the biosynthesis of branched-chain polyamines, which support the growth of thermophiles under high-temperature conditions. Catalyzes the sequential condensation of spermidine with the aminopropyl groups of decarboxylated S-adenosylmethionines to produce N(4)-bis(aminopropyl)spermidine via N(4)-aminopropylspermidine. Can also use spermine to produce N(4)-aminopropylspermine. The polypeptide is N(4)-bis(aminopropyl)spermidine synthase (Thermococcus kodakarensis (strain ATCC BAA-918 / JCM 12380 / KOD1) (Pyrococcus kodakaraensis (strain KOD1))).